The following is a 69-amino-acid chain: Large ribosomal subunit protein bL31 (69 aa).

This sequence belongs to the bacterial ribosomal protein bL31 family. Type A subfamily. As to quaternary structure, part of the 50S ribosomal subunit.

Binds the 23S rRNA. The polypeptide is Large ribosomal subunit protein bL31 (Mycoplasmopsis pulmonis (strain UAB CTIP) (Mycoplasma pulmonis)).